The sequence spans 116 residues: Protein Wnt-5(III) (116 aa).

Ser-1 carries O-palmitoleoyl serine; by PORCN lipidation. A glycan (N-linked (GlcNAc...) asparagine) is linked at Asn-69. A disulfide bridge connects residues Cys-82 and Cys-97.

Belongs to the Wnt family. Post-translationally, palmitoleoylation is required for efficient binding to frizzled receptors. Depalmitoleoylation leads to Wnt signaling pathway inhibition.

The protein resides in the secreted. It localises to the extracellular space. It is found in the extracellular matrix. Ligand for members of the frizzled family of seven transmembrane receptors. Probable developmental protein. May be a signaling molecule which affects the development of discrete regions of tissues. Is likely to signal over only few cell diameters. The polypeptide is Protein Wnt-5(III) (WNT-5(III)) (Eptatretus stoutii (Pacific hagfish)).